A 184-amino-acid polypeptide reads, in one-letter code: MNWRSEHIWIELITGSRKISNFCWACILFLGSLGFLLVGTSSYFGRNLISLFPSQQIVFFPQGIVMCFYGIAGLFISSYLWCTISWSVGSGYDKFDRKEGIVCIFRWGFPGRNRRIFFRFRIRDIRSIRIEVKEGLFPRRVLYMEIGGRGDIPLTRTDENLTPREIEQKAAESAYFLRVPIEVF.

The next 2 helical transmembrane spans lie at Ile19–Gly39 and Ile57–Ser77.

The protein belongs to the Ycf4 family.

It localises to the plastid. Its subcellular location is the chloroplast thylakoid membrane. Its function is as follows. Seems to be required for the assembly of the photosystem I complex. This Nymphaea alba (White water-lily) protein is Photosystem I assembly protein Ycf4.